A 534-amino-acid polypeptide reads, in one-letter code: Light-independent protochlorophyllide reductase subunit B (534 aa).

Aspartate 36 is a binding site for [4Fe-4S] cluster. Aspartate 274 serves as the catalytic Proton donor. 409-410 (GL) contributes to the substrate binding site. Positions 426-446 (DEAGPSHHGGKAVPASAPRAD) are disordered.

It belongs to the ChlB/BchB/BchZ family. As to quaternary structure, protochlorophyllide reductase is composed of three subunits; BchL, BchN and BchB. Forms a heterotetramer of two BchB and two BchN subunits. It depends on [4Fe-4S] cluster as a cofactor.

It catalyses the reaction chlorophyllide a + oxidized 2[4Fe-4S]-[ferredoxin] + 2 ADP + 2 phosphate = protochlorophyllide a + reduced 2[4Fe-4S]-[ferredoxin] + 2 ATP + 2 H2O. Its pathway is porphyrin-containing compound metabolism; bacteriochlorophyll biosynthesis (light-independent). Functionally, component of the dark-operative protochlorophyllide reductase (DPOR) that uses Mg-ATP and reduced ferredoxin to reduce ring D of protochlorophyllide (Pchlide) to form chlorophyllide a (Chlide). This reaction is light-independent. The NB-protein (BchN-BchB) is the catalytic component of the complex. In Cereibacter sphaeroides (strain ATCC 17023 / DSM 158 / JCM 6121 / CCUG 31486 / LMG 2827 / NBRC 12203 / NCIMB 8253 / ATH 2.4.1.) (Rhodobacter sphaeroides), this protein is Light-independent protochlorophyllide reductase subunit B.